Consider the following 331-residue polypeptide: Adenosine deaminase (331 aa).

Residues H12 and H14 each coordinate Zn(2+). Substrate-binding residues include H14, D16, and G170. Position 197 (H197) interacts with Zn(2+). The active-site Proton donor is the E200. Residue D278 participates in Zn(2+) binding. D279 is a binding site for substrate.

It belongs to the metallo-dependent hydrolases superfamily. Adenosine and AMP deaminases family. Adenosine deaminase subfamily. Requires Zn(2+) as cofactor.

The catalysed reaction is adenosine + H2O + H(+) = inosine + NH4(+). The enzyme catalyses 2'-deoxyadenosine + H2O + H(+) = 2'-deoxyinosine + NH4(+). Functionally, catalyzes the hydrolytic deamination of adenosine and 2-deoxyadenosine. This chain is Adenosine deaminase, found in Shewanella putrefaciens (strain CN-32 / ATCC BAA-453).